Reading from the N-terminus, the 314-residue chain is Methionyl-tRNA formyltransferase (314 aa).

112 to 115 (SLLP) contacts (6S)-5,6,7,8-tetrahydrofolate.

The protein belongs to the Fmt family.

It carries out the reaction L-methionyl-tRNA(fMet) + (6R)-10-formyltetrahydrofolate = N-formyl-L-methionyl-tRNA(fMet) + (6S)-5,6,7,8-tetrahydrofolate + H(+). Attaches a formyl group to the free amino group of methionyl-tRNA(fMet). The formyl group appears to play a dual role in the initiator identity of N-formylmethionyl-tRNA by promoting its recognition by IF2 and preventing the misappropriation of this tRNA by the elongation apparatus. This is Methionyl-tRNA formyltransferase from Legionella pneumophila subsp. pneumophila (strain Philadelphia 1 / ATCC 33152 / DSM 7513).